The chain runs to 320 residues: NAD-dependent protein deacylase SIR2rp2 (320 aa).

The N-terminal 22 residues, methionine 1–glycine 22, are a transit peptide targeting the mitochondrion. In terms of domain architecture, Deacetylase sirtuin-type spans cysteine 23–leucine 320. Residues glycine 28 to histidine 48 and glutamine 108 to aspartate 111 each bind NAD(+). The Proton acceptor role is filled by histidine 144. Positions 152, 155, 207, and 210 each coordinate Zn(2+). Residues glycine 248–serine 250, asparagine 274–glycine 276, and glycine 294 contribute to the NAD(+) site.

Belongs to the sirtuin family. Class II subfamily. The cofactor is Zn(2+).

It localises to the mitochondrion matrix. It carries out the reaction N(6)-acetyl-L-lysyl-[protein] + NAD(+) + H2O = 2''-O-acetyl-ADP-D-ribose + nicotinamide + L-lysyl-[protein]. In terms of biological role, NAD-dependent protein deacylase. Catalyzes the NAD-dependent hydrolysis of acyl groups from lysine residues. This Leishmania major protein is NAD-dependent protein deacylase SIR2rp2 (SIR2rp2).